The sequence spans 145 residues: Lysozyme-like protein 4 (145 aa).

A signal peptide spans 1–19 (MKASVVLSLIGYLVVPSDT). One can recognise a C-type lysozyme domain in the interval 20–145 (AVLGRCVVAK…LARWLDGCKL (126 aa)). Cystine bridges form between cysteine 25–cysteine 143, cysteine 49–cysteine 130, cysteine 84–cysteine 95, and cysteine 91–cysteine 109. Glutamate 54 is an active-site residue.

The protein belongs to the glycosyl hydrolase 22 family. In terms of assembly, monomer.

It localises to the secreted. It is found in the cytoplasmic vesicle. The protein resides in the secretory vesicle. Its subcellular location is the acrosome. The protein localises to the cell projection. It localises to the cilium. It is found in the flagellum. Functionally, may be involved in fertilization. Has no detectable bacteriolytic and lysozyme activities in vitro. The polypeptide is Lysozyme-like protein 4 (LYZL4) (Bos taurus (Bovine)).